The primary structure comprises 398 residues: tRNA-specific 2-thiouridylase MnmA (398 aa).

ATP is bound by residues 20-27 (AMSGGVDS) and Leu-46. Cys-114 acts as the Nucleophile in catalysis. The cysteines at positions 114 and 210 are disulfide-linked. ATP is bound at residue Gly-138. The segment at 160-162 (RDQ) is interaction with tRNA. Cys-210 (cysteine persulfide intermediate) is an active-site residue.

Belongs to the MnmA/TRMU family.

The protein resides in the cytoplasm. The catalysed reaction is S-sulfanyl-L-cysteinyl-[protein] + uridine(34) in tRNA + AH2 + ATP = 2-thiouridine(34) in tRNA + L-cysteinyl-[protein] + A + AMP + diphosphate + H(+). Its function is as follows. Catalyzes the 2-thiolation of uridine at the wobble position (U34) of tRNA, leading to the formation of s(2)U34. The sequence is that of tRNA-specific 2-thiouridylase MnmA from Brucella abortus (strain S19).